The sequence spans 487 residues: Serine/threonine-protein kinase 4 (487 aa).

An N-acetylmethionine modification is found at Met1. At Thr3 the chain carries Phosphothreonine. Positions 30–281 (FDVLEKLGEG…ATQLLQHPFV (252 aa)) constitute a Protein kinase domain. Residues 36-44 (LGEGSYGSV) and Lys59 each bind ATP. Residue Asp149 is the Proton acceptor of the active site. Position 183 is a phosphothreonine; by autocatalysis (Thr183). Position 265 is a phosphoserine (Ser265). A coiled-coil region spans residues 290–310 (LRDLINEAMDVKLKRQESQQR). Residues 303 to 312 (KRQESQQREV) are compositionally biased toward basic and acidic residues. The segment at 303–332 (KRQESQQREVDQDDEENSEEDEMDSGTMVR) is disordered. Residues 313 to 326 (DQDDEENSEEDEMD) are compositionally biased toward acidic residues. Ser320 is modified (phosphoserine). Residues Thr340 and Thr367 each carry the phosphothreonine modification. Position 387 is a phosphothreonine; by PKB/AKT1 (Thr387). Residues Ser410 and Ser414 each carry the phosphoserine modification. Residue Tyr433 is modified to Phosphotyrosine. An SARAH domain is found at 433-480 (YEFLKSWTVEDLQKRLLALDPMMEQEIEEIRQKYQSKRQPILDAIEAK).

Belongs to the protein kinase superfamily. STE Ser/Thr protein kinase family. STE20 subfamily. Homodimer; mediated via the coiled-coil region. Interacts with NORE1, which inhibits autoactivation. Interacts with and stabilizes SAV1. Interacts with RASSF1. Interacts with FOXO3. Interacts with RASSF2 (via SARAH domain). Interacts with AR, PKB/AKT1, TNNI3 and SIRT1. Interacts with DLG5 (via PDZ domain 3). Interacts with MARK3 and SCRIB in the presence of DLG5. It depends on Mg(2+) as a cofactor. Post-translationally, autophosphorylated on serine and threonine residues. Phosphorylation at Thr-387 by PKB/AKT1, leads to inhibition of its: kinase activity, nuclear translocation and autophosphorylation at Thr-183. It also diminishes its cleavage by caspases and its ability to phosphorylate FOXO3. Proteolytically cleaved by caspase-3 during apoptosis at Asp-326 and Asp-349 resulting in a 37 kDa or a 39 kDa subunit respectively. The 39 kDa subunit is further cleaved into the 37 kDa form. Proteolytic cleavage results in kinase activation and nuclear translocation of the truncated form (MST1/N). It is less likely that cleavage at Asp-349 is a prerequisite for activation as this site is not conserved in the murine ortholog.

The protein localises to the cytoplasm. It is found in the nucleus. It carries out the reaction L-seryl-[protein] + ATP = O-phospho-L-seryl-[protein] + ADP + H(+). The catalysed reaction is L-threonyl-[protein] + ATP = O-phospho-L-threonyl-[protein] + ADP + H(+). Inhibited by the C-terminal non-catalytic region. Activated by caspase-cleavage. Full activation also requires homodimerization and autophosphorylation of Thr-183. Activated by RASSF1 which acts by preventing its dephosphorylation. In terms of biological role, stress-activated, pro-apoptotic kinase which, following caspase-cleavage, enters the nucleus and induces chromatin condensation followed by internucleosomal DNA fragmentation. Key component of the Hippo signaling pathway which plays a pivotal role in organ size control and tumor suppression by restricting proliferation and promoting apoptosis. The core of this pathway is composed of a kinase cascade wherein STK3/MST2 and STK4/MST1, in complex with its regulatory protein SAV1, phosphorylates and activates LATS1/2 in complex with its regulatory protein MOB1, which in turn phosphorylates and inactivates YAP1 oncoprotein and WWTR1/TAZ. Phosphorylation of YAP1 by LATS2 inhibits its translocation into the nucleus to regulate cellular genes important for cell proliferation, cell death, and cell migration. STK3/MST2 and STK4/MST1 are required to repress proliferation of mature hepatocytes, to prevent activation of facultative adult liver stem cells (oval cells), and to inhibit tumor formation. Phosphorylates 'Ser-14' of histone H2B (H2BS14ph) during apoptosis. Phosphorylates FOXO3 upon oxidative stress, which results in its nuclear translocation and cell death initiation. Phosphorylates MOBKL1A, MOBKL1B and RASSF2. Phosphorylates TNNI3 (cardiac Tn-I) and alters its binding affinity to TNNC1 (cardiac Tn-C) and TNNT2 (cardiac Tn-T). Phosphorylates FOXO1 on 'Ser-212' and regulates its activation and stimulates transcription of PMAIP1 in a FOXO1-dependent manner. Phosphorylates SIRT1 and inhibits SIRT1-mediated p53/TP53 deacetylation, thereby promoting p53/TP53 dependent transcription and apoptosis upon DNA damage. Acts as an inhibitor of PKB/AKT1. Phosphorylates AR on 'Ser-650' and suppresses its activity by intersecting with PKB/AKT1 signaling and antagonizing formation of AR-chromatin complexes. The chain is Serine/threonine-protein kinase 4 (STK4) from Chlorocebus aethiops (Green monkey).